Here is a 738-residue protein sequence, read N- to C-terminus: Putative RNA-binding protein EEED8.10 (738 aa).

Residues 112–201 (RKIVVSNISA…QVMVVSAYVS (90 aa)) form the RRM domain. The tract at residues 211-237 (LSDDVGSREDTPLSRASSTQSLASGSE) is disordered. The segment covering 224–237 (SRASSTQSLASGSE) has biased composition (polar residues). In terms of domain architecture, F-box spans 239-297 (SFNLGNVPDKILRRVISFLPIHETIRLERVNKKFMEESIKSWELVNKIALARETVFNKQ).

This is Putative RNA-binding protein EEED8.10 from Caenorhabditis elegans.